Reading from the N-terminus, the 452-residue chain is UDP-N-acetylmuramoylalanine--D-glutamate ligase (452 aa).

115 to 121 (GTNGKTT) serves as a coordination point for ATP.

It belongs to the MurCDEF family.

Its subcellular location is the cytoplasm. The enzyme catalyses UDP-N-acetyl-alpha-D-muramoyl-L-alanine + D-glutamate + ATP = UDP-N-acetyl-alpha-D-muramoyl-L-alanyl-D-glutamate + ADP + phosphate + H(+). The protein operates within cell wall biogenesis; peptidoglycan biosynthesis. Functionally, cell wall formation. Catalyzes the addition of glutamate to the nucleotide precursor UDP-N-acetylmuramoyl-L-alanine (UMA). In Elusimicrobium minutum (strain Pei191), this protein is UDP-N-acetylmuramoylalanine--D-glutamate ligase.